The following is a 323-amino-acid chain: DNA-directed RNA polymerase subunit alpha 1 (323 aa).

The segment at 1 to 228 is alpha N-terminal domain (alpha-NTD); the sequence is MSNNNSKLEF…EQISVFVSLR (228 aa). Residues 244-323 form an alpha C-terminal domain (alpha-CTD) region; it reads IDPILLKPID…DNFRELVEGK (80 aa).

Belongs to the RNA polymerase alpha chain family. Homodimer. The RNAP catalytic core consists of 2 alpha, 1 beta, 1 beta' and 1 omega subunit. When a sigma factor is associated with the core the holoenzyme is formed, which can initiate transcription.

It catalyses the reaction RNA(n) + a ribonucleoside 5'-triphosphate = RNA(n+1) + diphosphate. Its function is as follows. DNA-dependent RNA polymerase catalyzes the transcription of DNA into RNA using the four ribonucleoside triphosphates as substrates. The sequence is that of DNA-directed RNA polymerase subunit alpha 1 from Francisella tularensis subsp. tularensis (strain FSC 198).